Here is a 490-residue protein sequence, read N- to C-terminus: Vacuolar amino acid transporter 7 (490 aa).

At methionine 1–serine 6 the chain is on the cytoplasmic side. Residues alanine 7–proline 27 traverse the membrane as a helical segment. The Vacuolar portion of the chain corresponds to tyrosine 28–glycine 34. A helical transmembrane segment spans residues valine 35–valine 55. Topologically, residues leucine 56 to proline 84 are cytoplasmic. The helical transmembrane segment at isoleucine 85–isoleucine 105 threads the bilayer. Over glycine 106–leucine 108 the chain is Vacuolar. The chain crosses the membrane as a helical span at residues phenylalanine 109 to isoleucine 129. The Cytoplasmic segment spans residues proline 130–serine 143. A helical transmembrane segment spans residues serine 144 to phenylalanine 164. The Vacuolar portion of the chain corresponds to glutamate 165–leucine 190. The helical transmembrane segment at leucine 191–isoleucine 211 threads the bilayer. The Cytoplasmic portion of the chain corresponds to asparagine 212–asparagine 221. The chain crosses the membrane as a helical span at residues isoleucine 222 to leucine 242. At serine 243 to serine 264 the chain is on the vacuolar side. The helical transmembrane segment at isoleucine 265–leucine 285 threads the bilayer. Topologically, residues phenylalanine 286 to threonine 397 are cytoplasmic. Residues asparagine 355 to glycine 374 form a disordered region. Residues asparagine 357 to asparagine 368 show a composition bias toward polar residues. The chain crosses the membrane as a helical span at residues alanine 398–leucine 418. Residues serine 419 to serine 428 lie on the Vacuolar side of the membrane. A helical membrane pass occupies residues isoleucine 429 to isoleucine 449. The Cytoplasmic segment spans residues glycine 450–cysteine 463. Residues serine 464–phenylalanine 484 form a helical membrane-spanning segment. The Vacuolar segment spans residues asparagine 485–alanine 490.

Belongs to the amino acid/polyamine transporter 2 family.

It localises to the vacuole membrane. Functionally, probable amino acid transporter of unknown specificity. The protein is Vacuolar amino acid transporter 7 (AVT7) of Saccharomyces cerevisiae (strain ATCC 204508 / S288c) (Baker's yeast).